The sequence spans 462 residues: uncharacterized protein (462 aa).

The HTH gntR-type domain occupies 22–90 (KPIYKALAGQ…VGSGTFVSYD (69 aa)). Residues 50–69 (QRELADYLDLNVSTISKAFK) constitute a DNA-binding region (H-T-H motif). Residue Lys-308 is modified to N6-(pyridoxal phosphate)lysine.

This sequence in the C-terminal section; belongs to the class-I pyridoxal-phosphate-dependent aminotransferase family. Pyridoxal 5'-phosphate serves as cofactor.

This is an uncharacterized protein from Bacillus subtilis (strain 168).